A 1254-amino-acid chain; its full sequence is AF4/FMR2 family member 3 (1254 aa).

The segment covering 45–62 (YEPDRNALRRKERERRSQ) has biased composition (basic and acidic residues). Disordered stretches follow at residues 45–90 (YEPD…GDEL), 139–190 (AESR…AAQQ), 261–324 (RPMD…GENN), 350–534 (EPSK…EGQD), and 552–752 (KTTC…SVGS). Composition is skewed to polar residues over residues 67–76 (DSGSFNSGYS) and 143–158 (AQPQPSTVCSTASSTP). Polar residues predominate over residues 359 to 369 (KDSQLVSSGHS). Low complexity predominate over residues 406–418 (QQAAQRTALRALA). Residues 421–433 (SVVQQTNCRGSAP) show a composition bias toward polar residues. The span at 441 to 472 (SSSSGGSSSSSDSESTSGSDSETESSSSSSES) shows a compositional bias: low complexity. A compositionally biased stretch (basic and acidic residues) spans 552–561 (KTTCKEEQRP). Positions 577-605 (SPPAAVAVTAAALPPAVPSAPTESAPAPT) are enriched in low complexity. Residues 615-633 (RRTERTSAGDGANCHRPEE) are compositionally biased toward basic and acidic residues. Composition is skewed to low complexity over residues 694–704 (TESSSSSSSSD) and 732–749 (AASSNNNSNSNSSTSRAS). A Phosphoserine modification is found at S782. The interval 813 to 883 (PGVLSAPSAK…ASTNNTLSGN (71 aa)) is disordered. Basic and acidic residues predominate over residues 857 to 869 (REIKKVQGRKESA). Positions 873–883 (AASTNNTLSGN) are enriched in polar residues. A Phosphoserine modification is found at S908. Disordered stretches follow at residues 919-991 (ASED…HRDC) and 1128-1171 (AAQA…SGLS). Polar residues-rich tracts occupy residues 922–941 (DLTSSSRPHGNGLLTSASSN) and 960–985 (ASHNSSENGTLHSKSRPQTEPWSPGS). Low complexity-rich tracts occupy residues 1132–1146 (PSPWGSSGKSTGSPS) and 1154–1171 (PASSVGSQGSLSSSSGLS).

This sequence belongs to the AF4 family. In terms of tissue distribution, highest levels found in lymphoid tissues, lower levels in brain and lung.

It localises to the nucleus. In terms of biological role, putative transcription activator that may function in lymphoid development and oncogenesis. The protein is AF4/FMR2 family member 3 (Aff3) of Mus musculus (Mouse).